Consider the following 385-residue polypeptide: uncharacterized protein (385 aa).

This sequence belongs to the peptidase M20 family.

This is an uncharacterized protein from Staphylococcus saprophyticus subsp. saprophyticus (strain ATCC 15305 / DSM 20229 / NCIMB 8711 / NCTC 7292 / S-41).